Consider the following 178-residue polypeptide: Large ribosomal subunit protein uL6 (178 aa).

Belongs to the universal ribosomal protein uL6 family. As to quaternary structure, part of the 50S ribosomal subunit.

Its function is as follows. This protein binds to the 23S rRNA, and is important in its secondary structure. It is located near the subunit interface in the base of the L7/L12 stalk, and near the tRNA binding site of the peptidyltransferase center. The polypeptide is Large ribosomal subunit protein uL6 (Streptococcus thermophilus (strain CNRZ 1066)).